A 207-amino-acid chain; its full sequence is Large ribosomal subunit protein uL4 (207 aa).

The interval 45–89 is disordered; it reads RQGTHKVKTRSEVRGGGRKPWRQKGTGRARQGSIRSPQWRGGGTV. Positions 60–71 are enriched in basic residues; that stretch reads GGRKPWRQKGTG.

Belongs to the universal ribosomal protein uL4 family. As to quaternary structure, part of the 50S ribosomal subunit.

In terms of biological role, one of the primary rRNA binding proteins, this protein initially binds near the 5'-end of the 23S rRNA. It is important during the early stages of 50S assembly. It makes multiple contacts with different domains of the 23S rRNA in the assembled 50S subunit and ribosome. Its function is as follows. Forms part of the polypeptide exit tunnel. This Bacillus anthracis (strain A0248) protein is Large ribosomal subunit protein uL4.